Reading from the N-terminus, the 107-residue chain is Putative double-stranded DNA mimic protein Spro_2690 (107 aa).

Belongs to the putative dsDNA mimic protein family.

Its function is as follows. May act as a double-stranded DNA (dsDNA) mimic. Probably regulates the activity of a dsDNA-binding protein. This Serratia proteamaculans (strain 568) protein is Putative double-stranded DNA mimic protein Spro_2690.